The following is a 158-amino-acid chain: Tryptophan-rich sensory protein (158 aa).

A run of 5 helical transmembrane segments spans residues 5-25 (WALFLTFLAACGAPATTGALL), 44-65 (WVFPLAWTSLYFLMSLAAMRVA), 73-93 (ALAFYAAQLAFNTLWTPVFFG), 97-119 (MATALAVVMVMWLFVAATMWAFF), and 124-144 (WAGVLFVPYLIWATAATGLNF).

The protein belongs to the TspO/BZRP family. Homodimer.

It is found in the membrane. The protein localises to the cell inner membrane. May play a role in the transmembrane transport of tetrapyrroles and similar compounds, and thereby contribute to the regulation of tetrapyrrole biosynthesis. Binds tetrapyrroles and promotes the photooxidative degradation of protoporphyrin IX. Binds protoporphyrin IX, hemin, and coproporphyrin III, but does not bind delta-aminolevulinic acid. Can bind bilirubin, curcumin, gossypol, retinoic acid, cholesterol and the benzodiazepine receptor agonist PK-11195 (in vitro). Plays a role in the response to low oxygen levels and in the regulation of the biosynthesis of photosynthetic pigments. The protein is Tryptophan-rich sensory protein of Cereibacter sphaeroides (Rhodobacter sphaeroides).